The following is a 430-amino-acid chain: Probable GPI-anchored adhesin-like protein PGA32 (430 aa).

The first 16 residues, 1–16 (MKVSTLIIVSIPIVSG), serve as a signal peptide directing secretion. Disordered stretches follow at residues 88 to 195 (LGQV…TVIN), 232 to 257 (IASASASSGSSTKDNDSDSSSARGIK), 278 to 302 (GGNGSGSNTNSYKNHSTTSTTSKYF), and 314 to 336 (SKSIYSNSTTSRSSLSVSSSSTD). Composition is skewed to low complexity over residues 92–112 (TTPSRTSTTTTTSNPIAPTTS) and 122–135 (TDTAPTTTTTTNAR). Polar residues predominate over residues 141 to 167 (TPVTVSGDNVLTLFGNPNLSTGNDQSN). Low complexity-rich tracts occupy residues 168–187 (SVSKTTAETTTTSSAPSSSS) and 233–253 (ASASASSGSSTKDNDSDSSSA). Polar residues predominate over residues 289 to 302 (YKNHSTTSTTSKYF). Residues 314-335 (SKSIYSNSTTSRSSLSVSSSST) are compositionally biased toward low complexity. A lipid anchor (GPI-anchor amidated glycine) is attached at glycine 401. The propeptide at 402-430 (DGNKLIGGNKYLISFMWTNLILTMIMLFT) is removed in mature form.

The protein resides in the cell membrane. Functionally, putative adhesin which is involved in cell adhesion and virulence. In Candida albicans (strain SC5314 / ATCC MYA-2876) (Yeast), this protein is Probable GPI-anchored adhesin-like protein PGA32 (PGA32).